Reading from the N-terminus, the 930-residue chain is MKLKDTLNLGKTEFPMRAGLPTKEPVWQKEWEDAKLYQRRQELNQGKPHFTLHDGPPYANGNIHVGHAMNKISKDIIVRSKSMSGFYAPFIPGWDTHGLPIEQVLSKQGVKRKEMDLVEYLKLCREYALSQVDKQREDFKRLGVSGDWENPYVTLTPDYEAAQIRVFGEMANKGYIYRGAKPVYWSWSSESALAEAEIEYHDLVSTSLYYANKVKDGKGVLDTDTYIVVWTTTPFTITASRGLTVGADIDYVLVQPVGEARKFVVAAELLTSLSEKFGWADVQVLETYRGQELNHIVTEHPWDTAVEELVILGDHVTTDSGTGIVHTAPGFGEDDYNVGIANNLEVAVTVDERGIMMKNAGPEFEGQFYEKVVPTVIEKLGNLLLAQEEISHSYPFDWRTKKPIIWRAVPQWFASVSKFRQEILDEIEKVKFHSEWGKVRLYNMIRDRGDWVISRQRTWGVPLPIFYAEDGTAIMVAETIEHVAQLFEKHGSSIWWERDAKDLLPEGFTHPGSPNGEFKKETDIMDVWFDSGSSWNGVVVNRPELTYPADLYLEGSDQYRGWFNSSLITSVANHGVAPYKQILSQGFALDGKGEKMSKSLGNTIAPSDVEKQFGAEILRLWVTSVDSSNDVRISMDILSQVSETYRKIRNTLRFLIANTSDFNPAQDTVAYDELRSVDKYMTIRFNQLVKTIRDAYADFEFLTIYKALVNFINVDLSAFYLDFAKDVVYIEGAKSLERRQMQTVFYDILVKITKLLTPILPHTAEEIWSYLEFETEDFVQLSELPEVQTFANQEEILDTWAAFMDFRGQAQKALEEARNAKVIGKSLEAHLTVYPNEVVKTLLEAVNSNVAQLLIVSELTIAEEPAPEAALSFEDVAFTVERAAGEVCDRCRRIDPTTAERSYQAVICDHCASIVEENFADAVAEGFEEK.

The 'HIGH' region motif lies at 57–67; that stretch reads PYANGNIHVGH. E554 contributes to the L-isoleucyl-5'-AMP binding site. The 'KMSKS' region signature appears at 595–599; the sequence is KMSKS. K598 serves as a coordination point for ATP. The Zn(2+) site is built by C888, C891, C908, and C911.

Belongs to the class-I aminoacyl-tRNA synthetase family. IleS type 1 subfamily. Monomer. Zn(2+) is required as a cofactor.

The protein localises to the cytoplasm. The catalysed reaction is tRNA(Ile) + L-isoleucine + ATP = L-isoleucyl-tRNA(Ile) + AMP + diphosphate. Functionally, catalyzes the attachment of isoleucine to tRNA(Ile). As IleRS can inadvertently accommodate and process structurally similar amino acids such as valine, to avoid such errors it has two additional distinct tRNA(Ile)-dependent editing activities. One activity is designated as 'pretransfer' editing and involves the hydrolysis of activated Val-AMP. The other activity is designated 'posttransfer' editing and involves deacylation of mischarged Val-tRNA(Ile). The protein is Isoleucine--tRNA ligase of Streptococcus pneumoniae serotype 19F (strain G54).